The chain runs to 295 residues: Tyrosine recombinase XerC (295 aa).

The Core-binding (CB) domain maps to 1 to 84 (MTLEEQFLSY…SLKSFYRLLT (84 aa)). Residues 105–289 (KLPEFFYQDE…SMQHLTAEYR (185 aa)) form the Tyr recombinase domain. Residues arginine 145, lysine 169, histidine 241, arginine 244, and histidine 267 contribute to the active site. Tyrosine 276 serves as the catalytic O-(3'-phospho-DNA)-tyrosine intermediate.

Belongs to the 'phage' integrase family. XerC subfamily. In terms of assembly, forms a cyclic heterotetrameric complex composed of two molecules of XerC and two molecules of XerD.

Its subcellular location is the cytoplasm. Site-specific tyrosine recombinase, which acts by catalyzing the cutting and rejoining of the recombining DNA molecules. The XerC-XerD complex is essential to convert dimers of the bacterial chromosome into monomers to permit their segregation at cell division. It also contributes to the segregational stability of plasmids. The polypeptide is Tyrosine recombinase XerC (Lactobacillus leichmannii).